A 117-amino-acid polypeptide reads, in one-letter code: Large ribosomal subunit protein bL20 (117 aa).

It belongs to the bacterial ribosomal protein bL20 family.

Binds directly to 23S ribosomal RNA and is necessary for the in vitro assembly process of the 50S ribosomal subunit. It is not involved in the protein synthesizing functions of that subunit. The polypeptide is Large ribosomal subunit protein bL20 (Symbiobacterium thermophilum (strain DSM 24528 / JCM 14929 / IAM 14863 / T)).